The following is a 276-amino-acid chain: Large ribosomal subunit protein uL2 (276 aa).

Disordered regions lie at residues 1 to 60 and 226 to 276; these read MSIK…RHKR and NAVD…KRNQ. The span at 20–31 shows a compositional bias: basic and acidic residues; sequence SKEEITREEPEK. Composition is skewed to basic residues over residues 50 to 60 and 258 to 276; these read STRRQGGRHKR and KTRR…KRNQ.

The protein belongs to the universal ribosomal protein uL2 family. As to quaternary structure, part of the 50S ribosomal subunit. Forms a bridge to the 30S subunit in the 70S ribosome.

Its function is as follows. One of the primary rRNA binding proteins. Required for association of the 30S and 50S subunits to form the 70S ribosome, for tRNA binding and peptide bond formation. It has been suggested to have peptidyltransferase activity; this is somewhat controversial. Makes several contacts with the 16S rRNA in the 70S ribosome. The chain is Large ribosomal subunit protein uL2 from Natranaerobius thermophilus (strain ATCC BAA-1301 / DSM 18059 / JW/NM-WN-LF).